The chain runs to 386 residues: Alanine racemase (386 aa).

Lys-48 (proton acceptor; specific for D-alanine) is an active-site residue. N6-(pyridoxal phosphate)lysine is present on Lys-48. Arg-149 contributes to the substrate binding site. Tyr-278 functions as the Proton acceptor; specific for L-alanine in the catalytic mechanism. Substrate is bound at residue Met-326.

This sequence belongs to the alanine racemase family. Pyridoxal 5'-phosphate serves as cofactor.

It catalyses the reaction L-alanine = D-alanine. It participates in amino-acid biosynthesis; D-alanine biosynthesis; D-alanine from L-alanine: step 1/1. Catalyzes the interconversion of L-alanine and D-alanine. May also act on other amino acids. The polypeptide is Alanine racemase (alr) (Nostoc sp. (strain PCC 7120 / SAG 25.82 / UTEX 2576)).